We begin with the raw amino-acid sequence, 205 residues long: ATP-dependent Clp protease proteolytic subunit (205 aa).

Catalysis depends on Ser98, which acts as the Nucleophile. Residue His123 is part of the active site.

This sequence belongs to the peptidase S14 family. In terms of assembly, fourteen ClpP subunits assemble into 2 heptameric rings which stack back to back to give a disk-like structure with a central cavity, resembling the structure of eukaryotic proteasomes.

Its subcellular location is the cytoplasm. It catalyses the reaction Hydrolysis of proteins to small peptides in the presence of ATP and magnesium. alpha-casein is the usual test substrate. In the absence of ATP, only oligopeptides shorter than five residues are hydrolyzed (such as succinyl-Leu-Tyr-|-NHMec, and Leu-Tyr-Leu-|-Tyr-Trp, in which cleavage of the -Tyr-|-Leu- and -Tyr-|-Trp bonds also occurs).. Cleaves peptides in various proteins in a process that requires ATP hydrolysis. Has a chymotrypsin-like activity. Plays a major role in the degradation of misfolded proteins. The protein is ATP-dependent Clp protease proteolytic subunit of Desulforapulum autotrophicum (strain ATCC 43914 / DSM 3382 / VKM B-1955 / HRM2) (Desulfobacterium autotrophicum).